The following is a 419-amino-acid chain: Metacaspase-1B (419 aa).

Residues 1–109 (MYHPNYNYPP…PPMEAQQFGK (109 aa)) form a disordered region. Positions 33-50 (SPPPPQPYYSNGYPPPSQ) are enriched in pro residues. Over residues 51-66 (SPHSYSPPQYPPHGQY) the composition is skewed to low complexity. Residues 82–93 (QYRSYHSHSPSW) show a composition bias toward polar residues. Catalysis depends on residues His-210 and Cys-266.

The protein belongs to the peptidase C14B family.

In terms of biological role, involved in cell death (apoptosis). In Aspergillus oryzae (strain ATCC 42149 / RIB 40) (Yellow koji mold), this protein is Metacaspase-1B (casB).